The chain runs to 117 residues: UPF0145 protein CV_4322 (117 aa).

The protein belongs to the UPF0145 family.

In Chromobacterium violaceum (strain ATCC 12472 / DSM 30191 / JCM 1249 / CCUG 213 / NBRC 12614 / NCIMB 9131 / NCTC 9757 / MK), this protein is UPF0145 protein CV_4322.